A 68-amino-acid polypeptide reads, in one-letter code: Large ribosomal subunit protein eL24 (68 aa).

C7, C10, C33, and C37 together coordinate Zn(2+). The segment at 7-37 adopts a C4-type zinc-finger fold; that stretch reads CSYCGREFEPGTGKMFVRNDGRVLFFCSSKC.

It belongs to the eukaryotic ribosomal protein eL24 family. As to quaternary structure, part of the 50S ribosomal subunit. Forms a cluster with proteins L3 and L14. Zn(2+) is required as a cofactor.

In terms of biological role, binds to the 23S rRNA. This chain is Large ribosomal subunit protein eL24, found in Thermococcus gammatolerans (strain DSM 15229 / JCM 11827 / EJ3).